The sequence spans 557 residues: Polypyrimidine tract-binding protein 1 (557 aa).

Position 1 is an N-acetylmethionine (M1). A Phosphoserine modification is found at S16. 3 consecutive RRM domains span residues 59–143 (RVIH…SSPN), 184–260 (LRII…FSKL), and 363–437 (SVLL…LSKH). Residue K65 forms a Glycyl lysine isopeptide (Lys-Gly) (interchain with G-Cter in SUMO2) linkage. Position 127 is a phosphotyrosine (Y127). The residue at position 138 (T138) is a Phosphothreonine. Residue S141 is modified to Phosphoserine. K218 is covalently cross-linked (Glycyl lysine isopeptide (Lys-Gly) (interchain with G-Cter in SUMO2)). Position 459 is a phosphoserine (S459). Residues 480-555 (ATLHLSNIPP…HHLRVSFSKS (76 aa)) form the RRM 4 domain.

In terms of assembly, monomer. Part of a ternary complex containing KHSRP, PTBP1, PTBP2 and HNRPH1. Interacts with RAVER1 and SFPQ.

It localises to the nucleus. Its function is as follows. Plays a role in pre-mRNA splicing and in the regulation of alternative splicing events. Activates exon skipping of its own pre-mRNA during muscle cell differentiation. Binds to the polypyrimidine tract of introns. May promote RNA looping when bound to two separate polypyrimidine tracts in the same pre-mRNA. May promote the binding of U2 snRNP to pre-mRNA. Cooperates with RAVER1 to modulate switching between mutually exclusive exons during maturation of the TPM1 pre-mRNA. Represses the splicing of MAPT/Tau exon 10. Binds to polypyrimidine-rich controlling element (PCE) of CFTR and promotes exon skipping of CFTR exon 9, thereby antagonizing TIA1 and its role in exon inclusion of CFTR exon 9. Plays a role in the splicing of pyruvate kinase PKM by binding repressively to a polypyrimidine tract flanking PKM exon 9, inhibiting exon 9 inclusion and resulting in exon 10 inclusion and production of the PKM M2 isoform. The chain is Polypyrimidine tract-binding protein 1 (PTBP1) from Sus scrofa (Pig).